Reading from the N-terminus, the 298-residue chain is tRNA pseudouridine synthase B (298 aa).

Residue Asp44 is the Nucleophile of the active site.

This sequence belongs to the pseudouridine synthase TruB family. Type 1 subfamily.

It catalyses the reaction uridine(55) in tRNA = pseudouridine(55) in tRNA. Functionally, responsible for synthesis of pseudouridine from uracil-55 in the psi GC loop of transfer RNAs. The protein is tRNA pseudouridine synthase B of Mycobacteroides abscessus (strain ATCC 19977 / DSM 44196 / CCUG 20993 / CIP 104536 / JCM 13569 / NCTC 13031 / TMC 1543 / L948) (Mycobacterium abscessus).